A 206-amino-acid polypeptide reads, in one-letter code: Holliday junction branch migration complex subunit RuvA (206 aa).

A domain I region spans residues 1–64; sequence MIGRLTGNLV…ETSQQLFGFI (64 aa). The domain II stretch occupies residues 65–142; sequence DQQDREFFRM…SWQVTPSVDA (78 aa). Residues 143-154 are flexible linker; it reads TGSLVALDSAAP. A domain III region spans residues 155–206; that stretch reads SQNAIVAEAESALVALGYKPVEASKAVARVTSDEITRSEDLIRLALRNMIPA.

The protein belongs to the RuvA family. As to quaternary structure, homotetramer. Forms an RuvA(8)-RuvB(12)-Holliday junction (HJ) complex. HJ DNA is sandwiched between 2 RuvA tetramers; dsDNA enters through RuvA and exits via RuvB. An RuvB hexamer assembles on each DNA strand where it exits the tetramer. Each RuvB hexamer is contacted by two RuvA subunits (via domain III) on 2 adjacent RuvB subunits; this complex drives branch migration. In the full resolvosome a probable DNA-RuvA(4)-RuvB(12)-RuvC(2) complex forms which resolves the HJ.

The protein localises to the cytoplasm. Functionally, the RuvA-RuvB-RuvC complex processes Holliday junction (HJ) DNA during genetic recombination and DNA repair, while the RuvA-RuvB complex plays an important role in the rescue of blocked DNA replication forks via replication fork reversal (RFR). RuvA specifically binds to HJ cruciform DNA, conferring on it an open structure. The RuvB hexamer acts as an ATP-dependent pump, pulling dsDNA into and through the RuvAB complex. HJ branch migration allows RuvC to scan DNA until it finds its consensus sequence, where it cleaves and resolves the cruciform DNA. This chain is Holliday junction branch migration complex subunit RuvA, found in Teredinibacter turnerae (strain ATCC 39867 / T7901).